We begin with the raw amino-acid sequence, 206 residues long: Small ribosomal subunit protein uS4 (206 aa).

The 62-residue stretch at 96–157 (SRLDNVVYRM…KAKKQVRIQE (62 aa)) folds into the S4 RNA-binding domain.

Belongs to the universal ribosomal protein uS4 family. Part of the 30S ribosomal subunit. Contacts protein S5. The interaction surface between S4 and S5 is involved in control of translational fidelity.

Functionally, one of the primary rRNA binding proteins, it binds directly to 16S rRNA where it nucleates assembly of the body of the 30S subunit. With S5 and S12 plays an important role in translational accuracy. The chain is Small ribosomal subunit protein uS4 from Neisseria gonorrhoeae (strain ATCC 700825 / FA 1090).